The chain runs to 664 residues: UvrABC system protein B (664 aa).

A Helicase ATP-binding domain is found at Ala24–Asn182. Residue Gly37–Thr44 participates in ATP binding. Positions Tyr90–Ile113 match the Beta-hairpin motif. One can recognise a Helicase C-terminal domain in the interval Gln427 to Thr593. The region spanning Leu624–Ala659 is the UVR domain.

This sequence belongs to the UvrB family. As to quaternary structure, forms a heterotetramer with UvrA during the search for lesions. Interacts with UvrC in an incision complex.

Its subcellular location is the cytoplasm. Functionally, the UvrABC repair system catalyzes the recognition and processing of DNA lesions. A damage recognition complex composed of 2 UvrA and 2 UvrB subunits scans DNA for abnormalities. Upon binding of the UvrA(2)B(2) complex to a putative damaged site, the DNA wraps around one UvrB monomer. DNA wrap is dependent on ATP binding by UvrB and probably causes local melting of the DNA helix, facilitating insertion of UvrB beta-hairpin between the DNA strands. Then UvrB probes one DNA strand for the presence of a lesion. If a lesion is found the UvrA subunits dissociate and the UvrB-DNA preincision complex is formed. This complex is subsequently bound by UvrC and the second UvrB is released. If no lesion is found, the DNA wraps around the other UvrB subunit that will check the other stand for damage. This Chloroflexus aggregans (strain MD-66 / DSM 9485) protein is UvrABC system protein B.